Reading from the N-terminus, the 349-residue chain is Two pore potassium channel b (349 aa).

The tract at residues 1–53 is disordered; that stretch reads MAALDQQPLLHDGGDQKPPPEGAARRFRRCRTAPSSEPPPTDKDNSSAADAPP. The Cytoplasmic segment spans residues 1–66; the sequence is MAALDQQPLL…FTGGGRPSFR (66 aa). A helical membrane pass occupies residues 67–87; it reads LVGLLLVAYLLLGTIAFYLAM. The segment at residues 100 to 119 is an intramembrane region (pore-forming); it reads DALYFCVVTMTTVGYGDLVP. The chain crosses the membrane as a helical span at residues 123–143; the sequence is AAKLLACAFVFAGVAVVGTFL. The Cytoplasmic portion of the chain corresponds to 144–180; the sequence is SKAADYLVEKQEALLFRALHSHTMVRAMEMNKVRYKL. The helical transmembrane segment at 181–201 threads the bilayer; sequence YTAGLLLVAAVASGTVVLWKV. The pore-forming intramembrane region spans 208–227; the sequence is DAFYCVCATVTTLGYGDRSF. The helical transmembrane segment at 234 to 254 threads the bilayer; sequence AFAVAWITVSTVVVALFFLYA. The Cytoplasmic segment spans residues 255–349; it reads AELYTERRQR…PTPDPPPSLR (95 aa). 2 EF-hand domains span residues 271–306 and 310–345; these read LRRR…ELGK and EDIS…PDPP. 10 residues coordinate Ca(2+): Asp-284, Asp-286, Asp-288, Arg-290, Asp-295, Asp-323, Asp-325, Ser-327, Thr-329, and Asp-334. The segment at 326–349 is disordered; that stretch reads HSGTLSPADLAAAQPTPDPPPSLR.

The protein belongs to the two pore domain potassium channel (TC 1.A.1.7) family. Homodimer.

It is found in the vacuole membrane. In terms of biological role, highly selective inward-rectifying potassium channel that is specifically located in the tonoplast of protein storage vacuoles. Functions independently of the voltage difference across the membrane. The sequence is that of Two pore potassium channel b (TPKB) from Oryza sativa subsp. japonica (Rice).